The following is a 104-amino-acid chain: Large ribosomal subunit protein bL21 (104 aa).

It belongs to the bacterial ribosomal protein bL21 family. As to quaternary structure, part of the 50S ribosomal subunit. Contacts protein L20.

Functionally, this protein binds to 23S rRNA in the presence of protein L20. The chain is Large ribosomal subunit protein bL21 from Streptococcus mutans serotype c (strain ATCC 700610 / UA159).